The sequence spans 534 residues: Cytochrome P450 monooxygenase vrtK (534 aa).

A heme-binding site is contributed by Cys-448.

It belongs to the cytochrome P450 family. Heme is required as a cofactor.

It functions in the pathway secondary metabolite biosynthesis; terpenoid biosynthesis. Cytochrome P450 monooxygenase; part of the gene cluster that mediates the biosynthesis of viridicatumtoxin, a tetracycline-like fungal meroterpenoid with a unique, fused spirobicyclic ring system. The first step of the pathway is the production of the malonamoyl-CoA starter unit for the polyketide synthase vrtA. The aldolase vrtJ may be involved in the synthesis of the malonamate substrate for malonamoyl-CoA synthetase vrtB. The polyketide synthase vrtA then may utilize the malonamoyl-CoA starter unit, followed by sequential condensation of eight malonyl-CoA units to form the polyketide backbone. The cyclization of the last ring could be mediated by the lactamase-like protein vrtG. The proposed post-PKS tailoring steps are a hydroxylation at C5 catalyzed the cytochrome P450 monooxygenase vrtE, a hydroxylation at C12a catalyzed by VrtH and/or VrtI, and an O-methylation by the O-methyltransferase vrtF. VrtC is then proposed to catalyze the transfer of a geranyl group synthesized by vrtD to the aromatic C ring of the tetracyclic polyketide intermediate of viridicatumtoxin to yield previridicatumtoxin. Finally, the cytochrome P450 monooxygenase vrtK catalyzes the spirocyclization of the geranyl moiety of previridicatumtoxin to afford viridicatumtoxin. This chain is Cytochrome P450 monooxygenase vrtK, found in Penicillium aethiopicum.